The chain runs to 198 residues: Pyridoxal 5'-phosphate synthase subunit PdxT (198 aa).

49 to 51 (GES) contributes to the L-glutamine binding site. Cys81 serves as the catalytic Nucleophile. L-glutamine is bound by residues Arg113 and 141-142 (IR). Active-site charge relay system residues include His177 and Glu179.

It belongs to the glutaminase PdxT/SNO family. In terms of assembly, in the presence of PdxS, forms a dodecamer of heterodimers. Only shows activity in the heterodimer.

It catalyses the reaction aldehydo-D-ribose 5-phosphate + D-glyceraldehyde 3-phosphate + L-glutamine = pyridoxal 5'-phosphate + L-glutamate + phosphate + 3 H2O + H(+). The catalysed reaction is L-glutamine + H2O = L-glutamate + NH4(+). The protein operates within cofactor biosynthesis; pyridoxal 5'-phosphate biosynthesis. Catalyzes the hydrolysis of glutamine to glutamate and ammonia as part of the biosynthesis of pyridoxal 5'-phosphate. The resulting ammonia molecule is channeled to the active site of PdxS. This chain is Pyridoxal 5'-phosphate synthase subunit PdxT, found in Mycobacterium ulcerans (strain Agy99).